Here is a 359-residue protein sequence, read N- to C-terminus: Phospho-N-acetylmuramoyl-pentapeptide-transferase (359 aa).

10 helical membrane-spanning segments follow: residues 23–43, 68–88, 92–112, 126–146, 165–185, 198–218, 235–255, 262–282, 287–307, and 336–356; these read VAFF…IKWA, MGGI…GNLF, VLLG…DDYM, MKFF…LYIG, AFKI…VFLA, GLAT…VYVA, SGEL…FLWY, VFMG…MAIV, ILLL…ILQV, and KIIV…LLSL.

Belongs to the glycosyltransferase 4 family. MraY subfamily. The cofactor is Mg(2+).

The protein localises to the cell inner membrane. The catalysed reaction is UDP-N-acetyl-alpha-D-muramoyl-L-alanyl-gamma-D-glutamyl-meso-2,6-diaminopimeloyl-D-alanyl-D-alanine + di-trans,octa-cis-undecaprenyl phosphate = di-trans,octa-cis-undecaprenyl diphospho-N-acetyl-alpha-D-muramoyl-L-alanyl-D-glutamyl-meso-2,6-diaminopimeloyl-D-alanyl-D-alanine + UMP. It participates in cell wall biogenesis; peptidoglycan biosynthesis. Functionally, catalyzes the initial step of the lipid cycle reactions in the biosynthesis of the cell wall peptidoglycan: transfers peptidoglycan precursor phospho-MurNAc-pentapeptide from UDP-MurNAc-pentapeptide onto the lipid carrier undecaprenyl phosphate, yielding undecaprenyl-pyrophosphoryl-MurNAc-pentapeptide, known as lipid I. This is Phospho-N-acetylmuramoyl-pentapeptide-transferase from Helicobacter hepaticus (strain ATCC 51449 / 3B1).